The following is a 151-amino-acid chain: High mobility group B protein 14 (151 aa).

Disordered regions lie at residues Met1–Met62 and Thr132–Glu151. Low complexity predominate over residues Lys7–Ser20. Over residues Arg35–Val56 the composition is skewed to basic residues. Residues Pro63–Thr132 constitute a DNA-binding region (HMG box). The segment covering Thr132–Glu142 has biased composition (basic and acidic residues). A Phosphoserine modification is found at Ser150.

Belongs to the HMGB family.

The protein resides in the nucleus. This Arabidopsis thaliana (Mouse-ear cress) protein is High mobility group B protein 14 (HMGB14).